We begin with the raw amino-acid sequence, 152 residues long: Ribosome maturation factor RimP (152 aa).

The protein belongs to the RimP family.

Its subcellular location is the cytoplasm. Its function is as follows. Required for maturation of 30S ribosomal subunits. The chain is Ribosome maturation factor RimP from Desulfatibacillum aliphaticivorans.